The following is an 82-amino-acid chain: Capsid protein G8P (82 aa).

A signal peptide spans 1–29 (MRVLSTVLAAKNKIALGAATMLVSAGSFA). The Periplasmic segment spans residues 30–54 (AEPNAATNYATEAMDSLKTQAIDLI). A helical membrane pass occupies residues 55–74 (SQTWPVVTTVVVAGLVIRLF). Over 75–82 (KKFSSKAV) the chain is Cytoplasmic.

This sequence belongs to the inovirus capsid protein family. As to quaternary structure, homomultimerizes. There are several thousands of this protein in the phage capsid.

It is found in the virion. The protein resides in the host membrane. In terms of biological role, self assembles to form a helical capsid wrapping up the viral genomic DNA. The capsid displays a filamentous structure with a length of 760-1950 nm and a width of 6-8 nm. The virion assembly and budding take place at the host inner membrane. The protein is Capsid protein G8P (VIII) of Salmonella phage IKe (Bacteriophage IKe).